The sequence spans 143 residues: Large ribosomal subunit protein uL13 (143 aa).

Belongs to the universal ribosomal protein uL13 family. Part of the 50S ribosomal subunit.

This protein is one of the early assembly proteins of the 50S ribosomal subunit, although it is not seen to bind rRNA by itself. It is important during the early stages of 50S assembly. In Desulfitobacterium hafniense (strain Y51), this protein is Large ribosomal subunit protein uL13.